Reading from the N-terminus, the 535-residue chain is Ribonuclease Y (535 aa).

The helical transmembrane segment at 4–24 (IILLIVSALIGLILGYALISI) threads the bilayer. The interval 118–141 (ENLSSKEKVLDSKEQSLTDKSKHI) is disordered. The 61-residue stretch at 225–285 (TITSVHLPDD…IRREIARMTL (61 aa)) folds into the KH domain. Positions 351–444 (VLRHSVEVGK…VAAADALSSA (94 aa)) constitute an HD domain.

It belongs to the RNase Y family.

It localises to the cell membrane. Functionally, endoribonuclease that initiates mRNA decay. This is Ribonuclease Y from Streptococcus pyogenes serotype M18 (strain MGAS8232).